Reading from the N-terminus, the 234-residue chain is Ribonuclease HII (234 aa).

The RNase H type-2 domain maps to 16-207; the sequence is ALVAGVDEAG…VRRMLTPKAI (192 aa). A divalent metal cation contacts are provided by D22, E23, and D115.

This sequence belongs to the RNase HII family. The cofactor is Mn(2+). Mg(2+) serves as cofactor.

It is found in the cytoplasm. The catalysed reaction is Endonucleolytic cleavage to 5'-phosphomonoester.. In terms of biological role, endonuclease that specifically degrades the RNA of RNA-DNA hybrids. The chain is Ribonuclease HII from Xylella fastidiosa (strain M12).